The sequence spans 233 residues: Rano class II histocompatibility antigen, A beta chain (233 aa).

Residues 1–80 form a beta-1 region; sequence DFVYQFKGLC…DTVCRYNYEE (80 aa). Residues 1–194 lie on the Extracellular side of the membrane; the sequence is DFVYQFKGLC…RAQSESAQSK (194 aa). Asn-14 carries N-linked (GlcNAc...) asparagine glycosylation. The segment at 81-184 is beta-2; it reads TEVPTSLRRL…SLESPVTVEW (104 aa). Positions 93-181 constitute an Ig-like C1-type domain; the sequence is PNVAISLSRT…DHASLESPVT (89 aa). Residues 185 to 194 are connecting peptide; it reads RAQSESAQSK. A helical transmembrane segment spans residues 195-215; it reads MLSGIGGLVLGVIFLGLGLFI. Residues 216–233 are Cytoplasmic-facing; that stretch reads RHKRQKGPQGPPPAGLLQ.

It belongs to the MHC class II family.

The protein localises to the membrane. Its function is as follows. Involved in the presentation of foreign antigens to the immune system. The protein is Rano class II histocompatibility antigen, A beta chain (RT1-B) of Rattus norvegicus (Rat).